Reading from the N-terminus, the 293-residue chain is MAIRLYRAYTPGTRNRTVSTFSEITTDKPEKSLIVKHHFCKGRNNRGVITCRHKGGGHKQQYRLIDFKRNRHNIVAKVASIEYDPNRNARIALLHYLDGEKRYILHPRSLSVGSMVLSGPTAPIEVGNALPLSSIPLGTAVHNIELRPSCGGQIVRAAGTYAQIVAKEGTFVTVKLPSSEVRMIRKECYATIGQVGNIDASNITLGKAGRNRWLGKRPTVRGVVMNPVDHPHGGGEGKSPIGRARPVTPWGKPALGVKTRNPNKYSNPYVLRPVNRIYFIKNLMIYYYVKIYT.

The disordered stretch occupies residues 224 to 245 (VMNPVDHPHGGGEGKSPIGRAR).

This sequence belongs to the universal ribosomal protein uL2 family. Part of the 50S ribosomal subunit.

It is found in the plastid. The protein resides in the chloroplast. The chain is Large ribosomal subunit protein uL2c (rpl2) from Pyropia yezoensis (Susabi-nori).